We begin with the raw amino-acid sequence, 414 residues long: Probable serine/threonine-protein kinase PBL26 (414 aa).

Cysteine 3 is lipidated: S-palmitoyl cysteine. Residues 17–41 (RDSDNSYRRNGEVTGRDNNKTHPEN) are compositionally biased toward basic and acidic residues. The tract at residues 17 to 55 (RDSDNSYRRNGEVTGRDNNKTHPENPKTVNEQNKNNDED) is disordered. Residues 79–356 (FRQECLIGEG…SDVVTALGFL (278 aa)) form the Protein kinase domain. Residues 85-93 (IGEGGFGRV) and lysine 108 each bind ATP. The residue at position 153 (tyrosine 153) is a Phosphotyrosine. Aspartate 206 acts as the Proton acceptor in catalysis. A Phosphoserine modification is found at serine 240. Residue threonine 246 is modified to Phosphothreonine. The residue at position 254 (tyrosine 254) is a Phosphotyrosine. A disordered region spans residues 364-394 (ISVPHYDDPPQPSDETSVEDSVAAEERERAV).

It belongs to the protein kinase superfamily. Ser/Thr protein kinase family. In terms of processing, palmitoylation at Cys-3 and Cys-6 are required for plasma membrane location.

Its subcellular location is the cell membrane. It carries out the reaction L-seryl-[protein] + ATP = O-phospho-L-seryl-[protein] + ADP + H(+). The enzyme catalyses L-threonyl-[protein] + ATP = O-phospho-L-threonyl-[protein] + ADP + H(+). Functionally, may be involved in plant defense signaling. The sequence is that of Probable serine/threonine-protein kinase PBL26 from Arabidopsis thaliana (Mouse-ear cress).